Here is a 566-residue protein sequence, read N- to C-terminus: Folate-like transporter DDB_G0272544 (566 aa).

The stretch at 24–81 (RNQDEDENENENNDNLENDNNKRNYISINNYEPYKEIDNNNNKNNNNNNIINNNNKIN) forms a coiled coil. The disordered stretch occupies residues 25 to 46 (NQDEDENENENNDNLENDNNKR). A compositionally biased stretch (acidic residues) spans 27–40 (DEDENENENNDNLE). 11 helical membrane passes run 148–168 (VFLLIFGILGEIIGYKVIIII), 171–191 (VAKILTIGVLLSTNNIIWMIL), 194–214 (ITEGLSYSAYTVFLAYIYFSL), 226–246 (VNAGYLVGIVSSGLLGQLLVE), 252–272 (VYLLSIACGTNILALILALGF), 304–324 (IWSGIAISIHQIVITYWQNLF), 332–352 (SWNGYISASAYFFASFFAIIP), 364–384 (GIILVLFGLLGGGLLVLMGFG), 388–408 (VVSALSFIIYNCCFEFVSPIV), 420–440 (IGVLFSFNIMVALTIQVLVQS), and 458–478 (YGACLFFLSFGFAILFGFLFL). A coiled-coil region spans residues 517–544 (YNANIIDFENNNNNNNNNNNNNNNNNNN). Residues 526–556 (NNNNNNNNNNNNNNNNNNNNNNNNNNNNNNN) are compositionally biased toward low complexity. The segment at 526–566 (NNNNNNNNNNNNNNNNNNNNNNNNNNNNNNNVGIGGNDNFK) is disordered.

The protein belongs to the reduced folate carrier (RFC) transporter (TC 2.A.48) family.

Its subcellular location is the membrane. Folate transporter. The chain is Folate-like transporter DDB_G0272544 from Dictyostelium discoideum (Social amoeba).